The chain runs to 179 residues: Peptide deformylase (179 aa).

The Fe cation site is built by C102 and H144. E145 is a catalytic residue. H148 lines the Fe cation pocket.

The protein belongs to the polypeptide deformylase family. Fe(2+) is required as a cofactor.

The catalysed reaction is N-terminal N-formyl-L-methionyl-[peptide] + H2O = N-terminal L-methionyl-[peptide] + formate. Removes the formyl group from the N-terminal Met of newly synthesized proteins. Requires at least a dipeptide for an efficient rate of reaction. N-terminal L-methionine is a prerequisite for activity but the enzyme has broad specificity at other positions. The protein is Peptide deformylase of Wolbachia sp. subsp. Brugia malayi (strain TRS).